Consider the following 122-residue polypeptide: Large ribosomal subunit protein uL14 (122 aa).

Belongs to the universal ribosomal protein uL14 family. Part of the 50S ribosomal subunit. Forms a cluster with proteins L3 and L19. In the 70S ribosome, L14 and L19 interact and together make contacts with the 16S rRNA in bridges B5 and B8.

Binds to 23S rRNA. Forms part of two intersubunit bridges in the 70S ribosome. The sequence is that of Large ribosomal subunit protein uL14 from Xylella fastidiosa (strain 9a5c).